The sequence spans 416 residues: Protein-glutamine gamma-glutamyltransferase (416 aa).

The segment at residues 1–29 (MHKRRRLLAFATVGAVICTAGFTPSVSQA) is a signal peptide (tat-type signal). Positions 30–85 (ASSGDGEEKGSYAETHGLTADDVESINALNERALTLGQPGKPPKELPPSASAPSRA) are excised as a propeptide. Residues 64–103 (TLGQPGKPPKELPPSASAPSRAPSDDRETPPAEPLDRMPE) are disordered. Residues 76–85 (PPSASAPSRA) are compositionally biased toward low complexity. Residues 86 to 103 (PSDDRETPPAEPLDRMPE) are compositionally biased toward basic and acidic residues. C149 is a catalytic residue. Residues 290-331 (GQDQRGSSDKRKYGDPEAFRPDQGTGLVDMSKDRSIPRSPAK) are disordered. Residues 295–309 (GSSDKRKYGDPEAFR) show a composition bias toward basic and acidic residues. Residues D340 and H359 contribute to the active site.

This sequence belongs to the bacterial TGase family. In terms of processing, predicted to be exported by the Tat system. The position of the signal peptide cleavage has not been experimentally proven.

It catalyses the reaction L-glutaminyl-[protein] + L-lysyl-[protein] = [protein]-L-lysyl-N(6)-5-L-glutamyl-[protein] + NH4(+). Its function is as follows. Catalyzes the cross-linking of proteins and the conjugation of polyamines to proteins. This chain is Protein-glutamine gamma-glutamyltransferase, found in Streptomyces cinnamoneus (Streptoverticillium cinnamoneum).